A 477-amino-acid chain; its full sequence is 3-isopropylmalate dehydratase large subunit 1 (477 aa).

C357, C417, and C420 together coordinate [4Fe-4S] cluster.

This sequence belongs to the aconitase/IPM isomerase family. LeuC type 1 subfamily. Heterodimer of LeuC and LeuD. Requires [4Fe-4S] cluster as cofactor.

It carries out the reaction (2R,3S)-3-isopropylmalate = (2S)-2-isopropylmalate. It functions in the pathway amino-acid biosynthesis; L-leucine biosynthesis; L-leucine from 3-methyl-2-oxobutanoate: step 2/4. In terms of biological role, catalyzes the isomerization between 2-isopropylmalate and 3-isopropylmalate, via the formation of 2-isopropylmaleate. This chain is 3-isopropylmalate dehydratase large subunit 1, found in Bradyrhizobium diazoefficiens (strain JCM 10833 / BCRC 13528 / IAM 13628 / NBRC 14792 / USDA 110).